The sequence spans 59 residues: Large ribosomal subunit protein uL30 (59 aa).

This sequence belongs to the universal ribosomal protein uL30 family. In terms of assembly, part of the 50S ribosomal subunit.

This chain is Large ribosomal subunit protein uL30, found in Histophilus somni (strain 129Pt) (Haemophilus somnus).